We begin with the raw amino-acid sequence, 120 residues long: Large ribosomal subunit protein bL19c (120 aa).

It belongs to the bacterial ribosomal protein bL19 family.

The protein resides in the plastid. The protein localises to the chloroplast. This Trieres chinensis (Marine centric diatom) protein is Large ribosomal subunit protein bL19c (rpl19).